Here is a 493-residue protein sequence, read N- to C-terminus: tRNA-dihydrouridine(20) synthase [NAD(P)+]-like (493 aa).

The tract at residues 1–333 (MILNSLSLCY…TQELDAQQAR (333 aa)) is catalytic domain. FMN contacts are provided by residues 18 to 20 (PMV), Glu43, and Gln87. Cys116 serves as the catalytic Proton donor. FMN contacts are provided by residues Lys155, His183, 214–216 (NGG), and 242–243 (AR). The span at 330–342 (QQARLSAKTSEQT) shows a compositional bias: polar residues. The interval 330–349 (QQARLSAKTSEQTGEPAEDT) is disordered. Interaction with tRNA stretches follow at residues 367–371 (QITPK) and 420–424 (KLAEQ). In terms of domain architecture, DRBM spans 369–436 (TPKMCLLEWC…AIVCLRSQGL (68 aa)). The tract at residues 438–493 (EGRLGEESPSLHKRKREAPDQDPGGPRAQELAQPGDLCKKPFVALGSGEESPLEGW) is disordered. Ser445 and Ser488 each carry phosphoserine.

Belongs to the Dus family. Dus2 subfamily. In terms of assembly, interacts with EPRS1. Interacts (via DRBM domain) with PRKRA and EIF2AK2/PKR (via DRBM 1 domain). It depends on FMN as a cofactor. Weak expression in heart, placenta and skeletal muscle. Up-regulated in most lung cancer cells (at protein level).

It localises to the cytoplasm. The protein resides in the endoplasmic reticulum. The enzyme catalyses 5,6-dihydrouridine(20) in tRNA + NADP(+) = uridine(20) in tRNA + NADPH + H(+). With respect to regulation, inhibited by canertinib, PD 168393, AST-1306 and PF-6274484. In terms of biological role, catalyzes the NADPH-dependent synthesis of dihydrouridine, a modified base found in the D-loop of most tRNAs. Specifically modifies U20 in cytoplasmic tRNAs. Activity depends on the presence of guanosine at position 19 in the tRNA substrate. Negatively regulates the activation of EIF2AK2/PKR. The protein is tRNA-dihydrouridine(20) synthase [NAD(P)+]-like (DUS2) of Homo sapiens (Human).